The following is a 356-amino-acid chain: UDP-3-O-acylglucosamine N-acyltransferase (356 aa).

His242 (proton acceptor) is an active-site residue.

The protein belongs to the transferase hexapeptide repeat family. LpxD subfamily. In terms of assembly, homotrimer.

The catalysed reaction is a UDP-3-O-[(3R)-3-hydroxyacyl]-alpha-D-glucosamine + a (3R)-hydroxyacyl-[ACP] = a UDP-2-N,3-O-bis[(3R)-3-hydroxyacyl]-alpha-D-glucosamine + holo-[ACP] + H(+). It functions in the pathway bacterial outer membrane biogenesis; LPS lipid A biosynthesis. Functionally, catalyzes the N-acylation of UDP-3-O-acylglucosamine using 3-hydroxyacyl-ACP as the acyl donor. Is involved in the biosynthesis of lipid A, a phosphorylated glycolipid that anchors the lipopolysaccharide to the outer membrane of the cell. The polypeptide is UDP-3-O-acylglucosamine N-acyltransferase (Acinetobacter baumannii (strain AB307-0294)).